The primary structure comprises 259 residues: UBX domain-containing protein 2A (259 aa).

Residues 1–151 form a required for interaction with CHRNA3 region; it reads MKDVDNLKSI…SATPKIVSKA (151 aa). A required for inhibition of CHRNA3 ubiquitination and translocation of CHRNA3 to the plasma membrane resulting in an increase in acetylcholine-gated nicotinic acetylcholine receptor currents region spans residues 1-164; it reads MKDVDNLKSI…EVENKNNLSA (164 aa). The 65-residue stretch at 60–124 folds into the SEP domain; sequence QVDVNIKLWK…VEDKKNEICL (65 aa). The segment at 167 to 259 is required for interaction with VCP; the sequence is LNNLEPITNI…TASFRELSEH (93 aa). The region spanning 169-246 is the UBX domain; the sequence is NLEPITNIQI…DLQNAVIIQR (78 aa).

Part of a complex composed of STUB1/CHIP, VCP/p97, CHRNA3, and UBXN2A that modulates the ubiquitination and endoplasmic reticulum-associated degradation (ERAD) of CHRNA3. Within the complex UBXN2A acts as a scaffold protein required for the interaction of CHRNA3 with VCP/p97, this interaction also inhibits CHRNA3 ubiquitination by STUB1/CHIP and subsequently ERAD. Interacts (via SEP domain) with CHRNA3 and interacts (via UBX domain) with VCP/P97; these interactions are required for the interaction of CHRNA3 with the STUB1-VCP-UBXN2A complex. Interacts with HSPA9/MOT-2 (via SBD domain); the interaction inhibits HSPA9/MOT-2 interaction with and degradation of p53, thereby promotes p53 translocation to the nucleus. Interacts with RICTOR. In terms of processing, ubiquitinated. In terms of tissue distribution, expressed in the colon (at protein level).

The protein resides in the golgi apparatus. It is found in the endoplasmic reticulum. Its subcellular location is the perikaryon. It localises to the cell projection. The protein localises to the dendrite. The protein resides in the nucleus. It is found in the cytoplasm. In terms of biological role, acts to repress the ubiquitination and subsequent endoplasmic reticulum-associated degradation of CHRNA3 by the STUB1-VCP-UBXN2A complex in cortical neurons. Also acts to promote the translocation of CHRNA3 to the plasma membrane and subsequently increases plasma membrane acetylcholine-gated ion-channel activation. Plays a role in the inhibition of STUB1-mediated TP53 degradation, via its interaction with HSPA9 which acts to inhibit TP53 binding to HSPA9. Positively mediates the ubiquitination and proteosomal degradation of RICTOR, may thereby act as a negative regulator of the mTORC2 pathway. This Homo sapiens (Human) protein is UBX domain-containing protein 2A.